Consider the following 252-residue polypeptide: Small ribosomal subunit protein uS3 (252 aa).

The 73-residue stretch at 39–111 (IRKLINNFTK…DVNLNVLEVK (73 aa)) folds into the KH type-2 domain. Positions 222 to 252 (KPFASQSSNTPNRRPRNFKGGNNNHVNAKKN) are disordered. The segment covering 241–252 (GGNNNHVNAKKN) has biased composition (polar residues).

It belongs to the universal ribosomal protein uS3 family. As to quaternary structure, part of the 30S ribosomal subunit. Forms a tight complex with proteins S10 and S14.

Binds the lower part of the 30S subunit head. Binds mRNA in the 70S ribosome, positioning it for translation. This Onion yellows phytoplasma (strain OY-M) protein is Small ribosomal subunit protein uS3.